The sequence spans 216 residues: Octanoyltransferase (216 aa).

Residues 33–216 (AATADELWIV…ANRLSTSLSR (184 aa)) enclose the BPL/LPL catalytic domain. Substrate-binding positions include 72-79 (RGGEVTYH), 148-150 (ALG), and 162-164 (GVS). Cys-180 acts as the Acyl-thioester intermediate in catalysis.

It belongs to the LipB family.

The protein resides in the cytoplasm. It catalyses the reaction octanoyl-[ACP] + L-lysyl-[protein] = N(6)-octanoyl-L-lysyl-[protein] + holo-[ACP] + H(+). The protein operates within protein modification; protein lipoylation via endogenous pathway; protein N(6)-(lipoyl)lysine from octanoyl-[acyl-carrier-protein]: step 1/2. Its function is as follows. Catalyzes the transfer of endogenously produced octanoic acid from octanoyl-acyl-carrier-protein onto the lipoyl domains of lipoate-dependent enzymes. Lipoyl-ACP can also act as a substrate although octanoyl-ACP is likely to be the physiological substrate. The chain is Octanoyltransferase from Janthinobacterium sp. (strain Marseille) (Minibacterium massiliensis).